We begin with the raw amino-acid sequence, 164 residues long: Outer membrane protein assembly factor BamE (164 aa).

A signal peptide spans 1-19 (MHAFFPRLLLLLLFLPLTH). Residues 111–164 (PAFSESEPAQNFFSPEQTFTPAPDTDSNMNEEPDKKGTVNFLKENQTNFYKDNQ) form a disordered region. Composition is skewed to polar residues over residues 117–140 (EPAQNFFSPEQTFTPAPDTDSNMN) and 153–164 (KENQTNFYKDNQ).

It belongs to the BamE family. As to quaternary structure, part of the Bam complex.

Its subcellular location is the cell outer membrane. Its function is as follows. Part of the outer membrane protein assembly complex, which is involved in assembly and insertion of beta-barrel proteins into the outer membrane. In Nitrosomonas europaea (strain ATCC 19718 / CIP 103999 / KCTC 2705 / NBRC 14298), this protein is Outer membrane protein assembly factor BamE.